Consider the following 157-residue polypeptide: Deoxyuridine 5'-triphosphate nucleotidohydrolase (157 aa).

DUMP is bound by residues S63, G76, D79, Y82, K87, R132, F137, and G138. Positions 125 to 157 are disordered; the sequence is NDLESTERGAGGFGSTGINDEKKRKLDEAEAKE. Residues 143-157 show a composition bias toward basic and acidic residues; the sequence is NDEKKRKLDEAEAKE.

The protein belongs to the dUTPase family. As to quaternary structure, homotrimer. It depends on Mg(2+) as a cofactor.

It carries out the reaction dUTP + H2O = dUMP + diphosphate + H(+). Its pathway is pyrimidine metabolism; dUMP biosynthesis; dUMP from dCTP (dUTP route): step 2/2. Its function is as follows. Involved in nucleotide metabolism via production of dUMP, the immediate precursor of thymidine nucleotides, and decreases the intracellular concentration of dUTP so that uracil cannot be incorporated into DNA. In Yarrowia lipolytica (strain CLIB 122 / E 150) (Yeast), this protein is Deoxyuridine 5'-triphosphate nucleotidohydrolase (DUT1).